The chain runs to 167 residues: MSKNSGKDKAKSATANKTIALNKRARHEYHIEERFEAGLALQGWEVKSIRAGRGNIIDAYAYVKHGEIFLIGAQITPLIQASTHVVANDRRERKLLLHRSEIDKLVGKVERDGYTIVPTAMYWSKNKIKLEVALAKGKQTHDKRDAAKDRDWAIEKQRVMRRGNRDA.

The protein belongs to the SmpB family.

Its subcellular location is the cytoplasm. Its function is as follows. Required for rescue of stalled ribosomes mediated by trans-translation. Binds to transfer-messenger RNA (tmRNA), required for stable association of tmRNA with ribosomes. tmRNA and SmpB together mimic tRNA shape, replacing the anticodon stem-loop with SmpB. tmRNA is encoded by the ssrA gene; the 2 termini fold to resemble tRNA(Ala) and it encodes a 'tag peptide', a short internal open reading frame. During trans-translation Ala-aminoacylated tmRNA acts like a tRNA, entering the A-site of stalled ribosomes, displacing the stalled mRNA. The ribosome then switches to translate the ORF on the tmRNA; the nascent peptide is terminated with the 'tag peptide' encoded by the tmRNA and targeted for degradation. The ribosome is freed to recommence translation, which seems to be the essential function of trans-translation. This is SsrA-binding protein from Stenotrophomonas maltophilia (strain K279a).